A 274-amino-acid polypeptide reads, in one-letter code: 4-hydroxy-tetrahydrodipicolinate reductase (274 aa).

12–17 (GAAGRM) is a binding site for NAD(+). Arg39 is a binding site for NADP(+). NAD(+)-binding positions include 102 to 104 (GTT) and 126 to 129 (SGNM). Catalysis depends on His160, which acts as the Proton donor/acceptor. His161 is a binding site for (S)-2,3,4,5-tetrahydrodipicolinate. The Proton donor role is filled by Lys164. 170–171 (GT) contributes to the (S)-2,3,4,5-tetrahydrodipicolinate binding site.

The protein belongs to the DapB family.

It localises to the cytoplasm. The enzyme catalyses (S)-2,3,4,5-tetrahydrodipicolinate + NAD(+) + H2O = (2S,4S)-4-hydroxy-2,3,4,5-tetrahydrodipicolinate + NADH + H(+). It carries out the reaction (S)-2,3,4,5-tetrahydrodipicolinate + NADP(+) + H2O = (2S,4S)-4-hydroxy-2,3,4,5-tetrahydrodipicolinate + NADPH + H(+). The protein operates within amino-acid biosynthesis; L-lysine biosynthesis via DAP pathway; (S)-tetrahydrodipicolinate from L-aspartate: step 4/4. Its function is as follows. Catalyzes the conversion of 4-hydroxy-tetrahydrodipicolinate (HTPA) to tetrahydrodipicolinate. The polypeptide is 4-hydroxy-tetrahydrodipicolinate reductase (Rhizobium rhizogenes (strain K84 / ATCC BAA-868) (Agrobacterium radiobacter)).